A 43-amino-acid chain; its full sequence is uncharacterized protein (43 aa).

The first 16 residues, 1 to 16 (MKLLNFILIIFNALKS), serve as a signal peptide directing secretion. N-linked (GlcNAc...) asparagine; by host glycosylation occurs at asparagine 37.

This is an uncharacterized protein from Acheta domesticus (House cricket).